Here is a 330-residue protein sequence, read N- to C-terminus: MDRPYDETVDIPDSEDIATPRLQQSLAENLDKLRDSYGDNSKLLTKTNSELANRSIKTASKSVIRMDSSSEKLCDRGSSDDDDDDDNDDDEDEDDDDDDENANIHDATEGVYNPADYEHLTVSSEIKEIFEYIQRYTPQTIELETKLKPFIPDYIPAVGDIDAFLKVPRPDGKPDYLGLLVLDEPCANQSDPTVLDLQLRALSKQTTTKQVTVKSLENAEHQTKAIENWIKSIADLYRTKPPPTVHYTKNMPEISQLMSEWPKSFEESISNMQLSLSQLDCSLKDYVDIICALLDIPVYNNRIHSLHLLFSLYLEFKNSQHFRQNESVIT.

Disordered regions lie at residues 1 to 21 (MDRPYDETVDIPDSEDIATPR) and 55 to 112 (SIKT…EGVY). Positions 7–16 (ETVDIPDSED) are enriched in acidic residues. Positions 68-79 (SSSEKLCDRGSS) are enriched in basic and acidic residues. Over residues 80-101 (DDDDDDDNDDDEDEDDDDDDEN) the composition is skewed to acidic residues.

It belongs to the IFT46 family.

It localises to the cytoplasm. Its subcellular location is the cytoskeleton. The protein resides in the cilium basal body. The protein localises to the cell projection. It is found in the cilium. Forms part of a complex involved in intraflagellar transport (IFT), the bi-directional movement of particles required for the assembly, maintenance and functioning of primary cilia. This is Intraflagellar transport protein 46 homolog from Schistosoma japonicum (Blood fluke).